A 106-amino-acid polypeptide reads, in one-letter code: uncharacterized protein (106 aa).

2 disordered regions span residues 27-47 and 83-106; these read FSDS…DVSD and SPAM…VQSK. Residues 29 to 39 are compositionally biased toward acidic residues; the sequence is DSEDEPDDEAS. Over residues 94-106 the composition is skewed to basic and acidic residues; that stretch reads GIEREDRGGVQSK.

Its subcellular location is the mitochondrion. This is an uncharacterized protein from Arabidopsis thaliana (Mouse-ear cress).